A 247-amino-acid chain; its full sequence is ATP synthase subunit a, chloroplastic (247 aa).

5 helical membrane passes run 28 to 48 (GQVL…CLLG), 95 to 115 (VPFL…GALI), 134 to 154 (INTT…AGIS), 199 to 219 (LVVG…IMLL), and 220 to 240 (GLFT…AYIG).

This sequence belongs to the ATPase A chain family. As to quaternary structure, F-type ATPases have 2 components, CF(1) - the catalytic core - and CF(0) - the membrane proton channel. CF(1) has five subunits: alpha(3), beta(3), gamma(1), delta(1), epsilon(1). CF(0) has four main subunits: a, b, b' and c.

It localises to the plastid. The protein localises to the chloroplast thylakoid membrane. Key component of the proton channel; it plays a direct role in the translocation of protons across the membrane. The polypeptide is ATP synthase subunit a, chloroplastic (Chlorella vulgaris (Green alga)).